The following is a 332-amino-acid chain: Homeobox protein DLX-2 (332 aa).

Over residues 19–28 (ASSTYHQHQQ) the composition is skewed to polar residues. The tract at residues 19 to 83 (ASSTYHQHQQ…QHPAGGGGGG (65 aa)) is disordered. The span at 40–49 (NSNSSSSNSS) shows a compositional bias: low complexity. Residues 55–75 (ESPTLPVSTATDSSYYTNQQH) are compositionally biased toward polar residues. Residues 155–214 (VRKPRTIYSSFQLAALQRRFQKTQYLALPERAELAASLGLTQTQVKIWFQNRRSKFKKMW) constitute a DNA-binding region (homeobox). 2 disordered regions span residues 219–272 (IPTE…SSPS) and 304–332 (PSQT…GTIF). At Ser235 the chain carries Phosphoserine. The segment covering 253–266 (AGGGPGSGGGGAGS) has biased composition (gly residues). Basic residues predominate over residues 310 to 320 (AHHHHHHHHHA).

Belongs to the distal-less homeobox family. Interacts (via homeobox DNA-binding domain) with POU4F2; this interaction enhances retinal ganglion cell (RGC) differentiation. Post-translationally, phosphorylated by serine/threonine kinases. As to expression, expressed only in neural and other ectodermal structures of the head: the brain, the vomeronasal organ, and the preameloblasts of the teeth. Primarily expressed in the germinal cells of the ventral forebrain in the midgestational embryo, and in both dorsal and ventral ventricular zones in late embryogenesis and early postnatal life. Expressed in the inner nuclear layer of the retina.

It is found in the nucleus. In terms of biological role, acts as a transcriptional activator. Activates transcription of CGA/alpha-GSU, via binding to the downstream activin regulatory element (DARE) in the gene promoter. Plays a role in terminal differentiation of interneurons, such as amacrine and bipolar cells in the developing retina. Likely to play a regulatory role in the development of the ventral forebrain. May play a role in craniofacial patterning and morphogenesis. The protein is Homeobox protein DLX-2 (Dlx2) of Mus musculus (Mouse).